We begin with the raw amino-acid sequence, 833 residues long: Leucine--tRNA ligase (833 aa).

The 'HIGH' region signature appears at Pro41–His52. Positions Lys610–Ser614 match the 'KMSKS' region motif. An ATP-binding site is contributed by Lys613.

It belongs to the class-I aminoacyl-tRNA synthetase family.

It is found in the cytoplasm. The enzyme catalyses tRNA(Leu) + L-leucine + ATP = L-leucyl-tRNA(Leu) + AMP + diphosphate. This chain is Leucine--tRNA ligase, found in Streptococcus mutans serotype c (strain ATCC 700610 / UA159).